Consider the following 383-residue polypeptide: Lipid-A-disaccharide synthase (383 aa).

Belongs to the LpxB family.

It carries out the reaction 2-N,3-O-bis[(3R)-3-hydroxytetradecanoyl]-alpha-D-glucosaminyl 1-phosphate + UDP-2-N,3-O-bis[(3R)-3-hydroxytetradecanoyl]-alpha-D-glucosamine = lipid A disaccharide (E. coli) + UDP + H(+). The catalysed reaction is a lipid X + a UDP-2-N,3-O-bis[(3R)-3-hydroxyacyl]-alpha-D-glucosamine = a lipid A disaccharide + UDP + H(+). Its pathway is glycolipid biosynthesis; lipid IV(A) biosynthesis; lipid IV(A) from (3R)-3-hydroxytetradecanoyl-[acyl-carrier-protein] and UDP-N-acetyl-alpha-D-glucosamine: step 5/6. In terms of biological role, condensation of UDP-2,3-diacylglucosamine and 2,3-diacylglucosamine-1-phosphate to form lipid A disaccharide, a precursor of lipid A, a phosphorylated glycolipid that anchors the lipopolysaccharide to the outer membrane of the cell. The polypeptide is Lipid-A-disaccharide synthase (Pectobacterium atrosepticum (strain SCRI 1043 / ATCC BAA-672) (Erwinia carotovora subsp. atroseptica)).